We begin with the raw amino-acid sequence, 284 residues long: 2-dehydro-3-deoxyphosphooctonate aldolase (284 aa).

It belongs to the KdsA family.

The protein resides in the cytoplasm. The enzyme catalyses D-arabinose 5-phosphate + phosphoenolpyruvate + H2O = 3-deoxy-alpha-D-manno-2-octulosonate-8-phosphate + phosphate. It functions in the pathway carbohydrate biosynthesis; 3-deoxy-D-manno-octulosonate biosynthesis; 3-deoxy-D-manno-octulosonate from D-ribulose 5-phosphate: step 2/3. Its pathway is bacterial outer membrane biogenesis; lipopolysaccharide biosynthesis. The polypeptide is 2-dehydro-3-deoxyphosphooctonate aldolase (Vibrio vulnificus (strain CMCP6)).